The chain runs to 202 residues: CASP-like protein 2B1 (202 aa).

Residues 1 to 29 lie on the Cytoplasmic side of the membrane; sequence MSYLGVGVSPGNVPVYHGTNSKVIDRRVR. The chain crosses the membrane as a helical span at residues 30-50; sequence LAELVLRCVICCLGVLAAVLV. Residues 51-72 are Extracellular-facing; sequence GTDTQVKEIFSIQKKARFTDMK. Residues 73 to 93 form a helical membrane-spanning segment; the sequence is ALVFLVAANGIAAAYSFVQGV. The Cytoplasmic segment spans residues 94–109; the sequence is RCVVGMVKGSVLFSKP. A helical transmembrane segment spans residues 110–132; it reads LAWVIFSGDQMMAYLTMSAVAAA. Topologically, residues 133-164 are extracellular; it reads AQSSVFAKLGQPDLQWMKICTMYGKFCNQVGE. Residues 165–185 traverse the membrane as a helical segment; the sequence is GIASALLVSVSMVVLSCISAF. Topologically, residues 186–202 are cytoplasmic; the sequence is SLFRLYGGNKGKDGARW.

It belongs to the Casparian strip membrane proteins (CASP) family. Homodimer and heterodimers.

It is found in the cell membrane. This is CASP-like protein 2B1 from Populus trichocarpa (Western balsam poplar).